The sequence spans 476 residues: Variant surface glycoprotein MITAT 1.2 (476 aa).

Residues 1-26 (MPSNQEARLFLAVLVLAQVLPILVDS) form the signal peptide. Disulfide bonds link cysteine 41/cysteine 171 and cysteine 149/cysteine 213. A glycan (N-linked (GlcNAc...) asparagine) is linked at asparagine 289. Disordered regions lie at residues 389 to 418 (QKHKPAESQQQAAETEGSCNKKDQNECKSP) and 435 to 459 (EEAKKVADETAKDGKTGNTNTTGSS). Disulfide bonds link cysteine 407/cysteine 419 and cysteine 415/cysteine 430. A compositionally biased stretch (basic and acidic residues) spans 435–449 (EEAKKVADETAKDGK). Residues 450–459 (TGNTNTTGSS) show a composition bias toward low complexity. Asparagine 454 is a glycosylation site (N-linked (GlcNAc...) asparagine). Serine 459 carries GPI-anchor amidated serine lipidation. The propeptide at 460-476 (NSFVISKTPLWLAVLLF) is removed in mature form.

Homodimer.

Its subcellular location is the cell membrane. Functionally, VSG forms a coat on the surface of the parasite. The trypanosome evades the immune response of the host by expressing a series of antigenically distinct VSGs from an estimated 1000 VSG genes. This is Variant surface glycoprotein MITAT 1.2 from Trypanosoma brucei brucei.